Consider the following 342-residue polypeptide: S-adenosylmethionine:tRNA ribosyltransferase-isomerase (342 aa).

Belongs to the QueA family. In terms of assembly, monomer.

It is found in the cytoplasm. It catalyses the reaction 7-aminomethyl-7-carbaguanosine(34) in tRNA + S-adenosyl-L-methionine = epoxyqueuosine(34) in tRNA + adenine + L-methionine + 2 H(+). It functions in the pathway tRNA modification; tRNA-queuosine biosynthesis. Transfers and isomerizes the ribose moiety from AdoMet to the 7-aminomethyl group of 7-deazaguanine (preQ1-tRNA) to give epoxyqueuosine (oQ-tRNA). This Streptococcus pneumoniae (strain ATCC BAA-255 / R6) protein is S-adenosylmethionine:tRNA ribosyltransferase-isomerase.